We begin with the raw amino-acid sequence, 619 residues long: Pentatricopeptide repeat-containing protein At3g22470, mitochondrial (619 aa).

The N-terminal 28 residues, 1–28 (MIQRLIPLNRKASNFTQILEKGTSLLHY), are a transit peptide targeting the mitochondrion. PPR repeat units lie at residues 69–103 (TPIDFNRLCSAVARTKQYDLVLGFCKGMELNGIEH), 104–138 (DMYTMTIMINCYCRKKKLLFAFSVLGRAWKLGYEP), 139–173 (DTITFSTLVNGFCLEGRVSEAVALVDRMVEMKQRP), 174–208 (DLVTVSTLINGLCLKGRVSEALVLIDRMVEYGFQP), 209–243 (DEVTYGPVLNRLCKSGNSALALDLFRKMEERNIKA), 244–278 (SVVQYSIVIDSLCKDGSFDDALSLFNEMEMKGIKA), 279–313 (DVVTYSSLIGGLCNDGKWDDGAKMLREMIGRNIIP), 314–348 (DVVTFSALIDVFVKEGKLLEAKELYNEMITRGIAP), 349–383 (DTITYNSLIDGFCKENCLHEANQMFDLMVSKGCEP), 384–418 (DIVTYSILINSYCKAKRVDDGMRLFREISSKGLIP), 419–453 (NTITYNTLVLGFCQSGKLNAAKELFQEMVSRGVPP), 454–488 (SVVTYGILLDGLCDNGELNKALEIFEKMQKSRMTL), 489–523 (GIGIYNIIIHGMCNASKVDDAWSLFCSLSDKGVKP), 524–558 (DVVTYNVMIGGLCKKGSLSEADMLFRKMKEDGCTP), and 559–593 (DDFTYNILIRAHLGGSGLISSVELIEEMKVCGFSA).

Belongs to the PPR family. P subfamily.

It is found in the mitochondrion. This Arabidopsis thaliana (Mouse-ear cress) protein is Pentatricopeptide repeat-containing protein At3g22470, mitochondrial.